Here is a 439-residue protein sequence, read N- to C-terminus: Phosphomethylpyrimidine synthase (439 aa).

Residues asparagine 67, methionine 96, tyrosine 126, histidine 165, 187–189, 228–231, and glutamate 267 each bind substrate; these read SRG and DSLR. Position 271 (histidine 271) interacts with Zn(2+). Tyrosine 294 is a binding site for substrate. Zn(2+) is bound at residue histidine 335. 3 residues coordinate [4Fe-4S] cluster: cysteine 411, cysteine 414, and cysteine 418.

The protein belongs to the ThiC family. It depends on [4Fe-4S] cluster as a cofactor.

The enzyme catalyses 5-amino-1-(5-phospho-beta-D-ribosyl)imidazole + S-adenosyl-L-methionine = 4-amino-2-methyl-5-(phosphooxymethyl)pyrimidine + CO + 5'-deoxyadenosine + formate + L-methionine + 3 H(+). It functions in the pathway cofactor biosynthesis; thiamine diphosphate biosynthesis. Catalyzes the synthesis of the hydroxymethylpyrimidine phosphate (HMP-P) moiety of thiamine from aminoimidazole ribotide (AIR) in a radical S-adenosyl-L-methionine (SAM)-dependent reaction. This is Phosphomethylpyrimidine synthase from Ignicoccus hospitalis (strain KIN4/I / DSM 18386 / JCM 14125).